The sequence spans 483 residues: GDP-fucose protein O-fucosyltransferase 4 (483 aa).

M1 is a topological domain (cytoplasmic). The chain crosses the membrane as a helical; Signal-anchor for type II membrane protein span at residues 2-21 (ALCLWLFLVLPICCWCQGAV). Over 22-483 (DLGDSGVFQP…RARGLSNDSR (462 aa)) the chain is Lumenal. Residues N151 and N303 are each glycosylated (N-linked (GlcNAc...) asparagine). C374 and C377 form a disulfide bridge. A disordered region spans residues 387-425 (RKAHRKNPKQNQPPQPKMANSSHMGCPLPSPGYGPVENV). N406, N428, N456, and N480 each carry an N-linked (GlcNAc...) asparagine glycan.

It belongs to the glycosyltransferase 10 family.

It is found in the endoplasmic reticulum membrane. It carries out the reaction L-threonyl-[protein] + GDP-beta-L-fucose = 3-O-(alpha-L-fucosyl)-L-threonyl-[protein] + GDP + H(+). The enzyme catalyses L-seryl-[protein] + GDP-beta-L-fucose = 3-O-(alpha-L-fucosyl)-L-seryl-[protein] + GDP + H(+). The protein operates within protein modification; protein glycosylation. Functionally, protein O-fucosyltransferase that specifically catalyzes O-fucosylation of serine or threonine residues in EMI domains of target proteins. Attaches fucose through an O-glycosidic linkage. O-fucosylation of EMI domain-containing proteins may be required for facilitating protein folding and secretion. This is GDP-fucose protein O-fucosyltransferase 4 (fut11) from Danio rerio (Zebrafish).